The primary structure comprises 1368 residues: DNA-directed RNA polymerase subunit beta (1368 aa).

This sequence belongs to the RNA polymerase beta chain family. The RNAP catalytic core consists of 2 alpha, 1 beta, 1 beta' and 1 omega subunit. When a sigma factor is associated with the core the holoenzyme is formed, which can initiate transcription.

It catalyses the reaction RNA(n) + a ribonucleoside 5'-triphosphate = RNA(n+1) + diphosphate. Its function is as follows. DNA-dependent RNA polymerase catalyzes the transcription of DNA into RNA using the four ribonucleoside triphosphates as substrates. In Ralstonia pickettii (strain 12J), this protein is DNA-directed RNA polymerase subunit beta.